The primary structure comprises 824 residues: Leucine--tRNA ligase (824 aa).

The 'HIGH' region signature appears at 41 to 51 (PYPSGTLHVGH). A 'KMSKS' region motif is present at residues 580–584 (KMSKS). Lys-583 contributes to the ATP binding site.

This sequence belongs to the class-I aminoacyl-tRNA synthetase family.

The protein resides in the cytoplasm. It catalyses the reaction tRNA(Leu) + L-leucine + ATP = L-leucyl-tRNA(Leu) + AMP + diphosphate. This Thermotoga petrophila (strain ATCC BAA-488 / DSM 13995 / JCM 10881 / RKU-1) protein is Leucine--tRNA ligase.